A 152-amino-acid polypeptide reads, in one-letter code: Orientotoxin-1 (152 aa).

As to expression, expressed by the venom gland.

It localises to the secreted. The enzyme catalyses a 1-acyl-sn-glycero-3-phosphocholine + H2O = sn-glycerol 3-phosphocholine + a fatty acid + H(+). Functionally, neurotoxin of presynaptic effect which degrades lysophospholipids. The chain is Orientotoxin-1 from Vespa orientalis (Oriental hornet).